We begin with the raw amino-acid sequence, 339 residues long: MAAVRGSPPEYKVRAVEEIKRMISSKPVVAIVSFRNVPAGQMQKIRREFRGKAEIKVVKNTLLERALDALGGDYLKLKDYLGDQIAIITADENPFRLFRMIEDTKVPSPLKPNQVSPVDVVVNEGPTPIPPGPLMAELQMAGLPVAIEKGKVVVKATTTVVKAGEVVRPEVARALERLDIKPIKIGLDVKAMLDSGVILTPETLAIDTEKVLEDFQRAYQMALNLAVNSAYVTEETAEILIMKAVMDARNLAINAGIFEKGVMEDILMKAHAEMLSLASLLPDEALDEELKSMLSGIAEAAAQATPSVEEREEEEKPEEEEEEEEKEEEAIEGLGALFG.

A disordered region spans residues 300 to 339 (AAAQATPSVEEREEEEKPEEEEEEEEKEEEAIEGLGALFG). The span at 310–331 (EREEEEKPEEEEEEEEKEEEAI) shows a compositional bias: acidic residues.

Belongs to the universal ribosomal protein uL10 family. Part of the 50S ribosomal subunit. Forms part of the ribosomal stalk which helps the ribosome interact with GTP-bound translation factors. Forms a heptameric L10(L12)2(L12)2(L12)2 complex, where L10 forms an elongated spine to which the L12 dimers bind in a sequential fashion.

Forms part of the ribosomal stalk, playing a central role in the interaction of the ribosome with GTP-bound translation factors. This chain is Large ribosomal subunit protein uL10, found in Archaeoglobus fulgidus (strain ATCC 49558 / DSM 4304 / JCM 9628 / NBRC 100126 / VC-16).